A 512-amino-acid polypeptide reads, in one-letter code: MEISVASVTVSVAVVVVSWWVWRTLQWVWFKPKMLESYLRRQGLAGTPYTPLVGDLKKNFSMRAEARSKPINLTDDITPRIVPYPLQMLKTHGRTFFTWFGAIPTITIMDPEQITEVLNKVYDFQKAHTFPLGRLIATGVLSYDGDKWAKHRRIINPAFHLEKIKNMVPAFHQSCSEIVCKWDKLVSDKESSCEVDVWPGLVSMTADVISRTAFGSSCVEGQRIFELQAELAQLIIQTVRKAFIPGYSYLPTKGNRRMKAKAREIQVILRGIVNKRLRAREAGEAPNDDLLGILLESNLGQTKGNGMSTEDLMEECKLFYFVGQETTSVLLVWTMVLLSQHQDWQARAREEVKQVFGDKEPDAEGLNQLKVMTMILYEVLRLYPPIPQLSRAIHKEMELGDLTLPGGVLINLPILLVQRDTELWGNDAGEFKPDRFKDGLSKATKNQASFFPFAWGSRICIGQNFALLEAKMAMALILQRFSFELSPSYVHAPYTVFTIHPQFGAPLIMHKL.

Residues 2 to 22 traverse the membrane as a helical segment; it reads EISVASVTVSVAVVVVSWWVW. Cys460 serves as a coordination point for heme.

The protein belongs to the cytochrome P450 family. Requires heme as cofactor.

Its subcellular location is the membrane. This is Cytochrome P450 72A11 (CYP72A11) from Arabidopsis thaliana (Mouse-ear cress).